The following is a 1784-amino-acid chain: MARLLPPTGTDVFRPLTLESLAEIDRRMAEEAAEQERMKEQNVKVAEEDLPKPTSDLEAGKVLPFIYGDPPPNLLNVPIEELDPYYKAQKTFIVIDKKNTIYRFNTEPACYCLSPFNPVRRAAIRILIHSLFSLVIMLTILTNCVFMAMSDPPGWSKILEYVFTGIYTFEAMVKVLSRGFCIGDFTFLRDPWNWLDFMVISMAYLTEFVDLGNISALRTFRVLRALKTITVIPGLKTIVGALIQSVKKLADVMILTVFCLSVFALIGLQLFMGNLRQKCVLWPPVGWYSDNLTVLSNYTDINGNGTANSTFDYQKYINSEENYYYVPGQMDPLVCGNSSDAGLCPEGYICLKAGRNPNYGYTSYDNFGWAFLALFRLMTQDFWENLFQLTLRAAGKTYMIFFVVIIFLGSFYLINLILAVVAMAYAEQNEATAAEAKEKEEEYAKIMEQLKKQAEQKNGMVNGSKTSLSSKKKGDNDQMQSDYDGIALKPLSKSNGSKGNINYLEVPDSQIRKPSVVSAVESALDAQEDIERPCPPGWYKFADIFLKWDCCIPWVKFKRIVYLFVMDPFVDLGITLCIVLNTVFMAMEHYPMSVHVEEVLAIGNLVFTGIFAAEMVLKLIALDPYYYFQVGWNIFDSIIVTMSLVELMLADVEGLSVLRSFRLMRVFKLAKSWPTLNMLIKIIGNSVGALGNLTLVLAIIVFIFAVVGMQLFGKSYTDSVCKISSDCELPRWHMADFFHAFLIIFRVLCGEWIETMWDCMEVAGQGMCIIVFMMVMVIGNLVVLNLFLALLLSSFSGDNLSASDDDGENNLQIAISRITRGIDWIKAFVNKHVRQCLNLKPKEEGAKVNGEGDAKMNAIMNSSSSMVKVPIANGESDDDDGNGSSEDEDDEGRDINMKKKNGDESSTCSTVDKPPEVEDLVEEEEEDLTSPEDCYTENCIRRCPCLDLDVSQGKGKAWWNFRKTCFAIVEHSYFETFIIFMILLSSGALAFEDIYIEQRRMIKIILEYADQVFTYVFVVEMLLKWVAYGFKVYFTNAWCWLDFLIVDVSLISLTANILGYSELGAIKSLRTLRALRPLRALSRFEGMRVVVVNALVGAIPSIFNVLLVCLIFWLIFSIMGVNLFAGKFYYCFNETSEEVFDHNVVNNKTDCYELMEFHPEVRWMNGKINFDNVGMGYLALLQVATFKGWMDIMYSAVDSRAIESQPVYEANLYMYIYFVIFIIFGSFFTLNLFIGVIIDNFNQQKAKLGGTDIFMTEEQKKYYNAMKKLGSKKPQKPIPRPTNCCQGLVFDFVTQQFFDIFIMVMICLNMVTMMVETDDQSAEIEEILFYINFAFIILFTGECVLKITALRYHYFSIGWNIFDFVVVILSILGIGLADLIEKYFVSPTLFRVIRLARIGRVLRLIRGAKGIRTLLFALMMSLPALFNIGLLLFLIMFIFSIFGMSNFAYVKKEVGIDDMMNFETFGNSIICMFMITTSAGWDGLLAPILNSPPDCDPDVDNPGSTTRGNCGNAAVGIVFFCSYIVMSFLVVVNMYIAIILENFNVATEESSDPLCEDDFEMFYETWEKFDPTASQFIDYNRLSEFCDTLKDPLRIPKPNTLKLITMDIPMVTGDKIHCLDLLLALTGEVLGGSDQMDGMKATMEEKFMANNPSKASYEPITSTLKRKQEEVAASTIQRAYRSHILKRCVKQASYMYRDKTGSKKPTGEAPEKVGMIAENMRSLYGDQAVEDDHPVGCSFSQHGKTQFGAKRPPVKVQSDVVLHSAPFPVPESSTAADNLRESIV.

Topologically, residues 1–130 (MARLLPPTGT…RAAIRILIHS (130 aa)) are cytoplasmic. Residues 29–48 (AEEAAEQERMKEQNVKVAEE) are disordered. One copy of the I repeat lies at 112 to 429 (CLSPFNPVRR…VVAMAYAEQN (318 aa)). The helical transmembrane segment at 131–149 (LFSLVIMLTILTNCVFMAM) threads the bilayer. Residues 150–156 (SDPPGWS) lie on the Extracellular side of the membrane. The chain crosses the membrane as a helical span at residues 157 to 177 (KILEYVFTGIYTFEAMVKVLS). Topologically, residues 178 to 191 (RGFCIGDFTFLRDP) are cytoplasmic. A helical transmembrane segment spans residues 192-209 (WNWLDFMVISMAYLTEFV). Residues 210 to 215 (DLGNIS) lie on the Extracellular side of the membrane. Asparagine 213 carries N-linked (GlcNAc...) asparagine glycosylation. The chain crosses the membrane as a helical span at residues 216–232 (ALRTFRVLRALKTITVI). Residues 233 to 251 (PGLKTIVGALIQSVKKLAD) are Cytoplasmic-facing. A helical membrane pass occupies residues 252–271 (VMILTVFCLSVFALIGLQLF). Over 272 to 366 (MGNLRQKCVL…PNYGYTSYDN (95 aa)) the chain is Extracellular. An intrachain disulfide couples cysteine 279 to cysteine 335. Residues asparagine 291, asparagine 304, and asparagine 337 are each glycosylated (N-linked (GlcNAc...) asparagine). Cysteine 344 and cysteine 350 are oxidised to a cystine. The pore-forming intramembrane region spans 367-391 (FGWAFLALFRLMTQDFWENLFQLTL). Over 392-398 (RAAGKTY) the chain is Extracellular. The chain crosses the membrane as a helical span at residues 399-419 (MIFFVVIIFLGSFYLINLILA). Over 420–568 (VVAMAYAEQN…RIVYLFVMDP (149 aa)) the chain is Cytoplasmic. Residues 455 to 478 (EQKNGMVNGSKTSLSSKKKGDNDQ) are disordered. Residues 550–821 (CCIPWVKFKR…QIAISRITRG (272 aa)) form an II repeat. The helical transmembrane segment at 569–587 (FVDLGITLCIVLNTVFMAM) threads the bilayer. Over 588-598 (EHYPMSVHVEE) the chain is Extracellular. Residues 599–618 (VLAIGNLVFTGIFAAEMVLK) traverse the membrane as a helical segment. The Cytoplasmic portion of the chain corresponds to 619-632 (LIALDPYYYFQVGW). Residues 633–652 (NIFDSIIVTMSLVELMLADV) form a helical membrane-spanning segment. Topologically, residues 653–654 (EG) are extracellular. Residues 655–672 (LSVLRSFRLMRVFKLAKS) traverse the membrane as a helical segment. Residues 673 to 688 (WPTLNMLIKIIGNSVG) lie on the Cytoplasmic side of the membrane. The helical transmembrane segment at 689–707 (ALGNLTLVLAIIVFIFAVV) threads the bilayer. Topologically, residues 708–736 (GMQLFGKSYTDSVCKISSDCELPRWHMAD) are extracellular. Cysteine 721 and cysteine 727 are oxidised to a cystine. The pore-forming intramembrane region spans 737 to 757 (FFHAFLIIFRVLCGEWIETMW). Over 758-768 (DCMEVAGQGMC) the chain is Extracellular. Residues cysteine 759 and cysteine 768 are joined by a disulfide bond. The chain crosses the membrane as a helical span at residues 769–787 (IIVFMMVMVIGNLVVLNLF). Topologically, residues 788 to 973 (LALLLSSFSG…TCFAIVEHSY (186 aa)) are cytoplasmic. Residues 870-928 (PIANGESDDDDGNGSSEDEDDEGRDINMKKKNGDESSTCSTVDKPPEVEDLVEEEEEDL) are disordered. Residues 875–892 (ESDDDDGNGSSEDEDDEG) show a composition bias toward acidic residues. The segment covering 893–903 (RDINMKKKNGD) has biased composition (basic and acidic residues). Positions 917-928 (VEDLVEEEEEDL) are enriched in acidic residues. Residues 954–1269 (KGKAWWNFRK…KKYYNAMKKL (316 aa)) form an III repeat. The chain crosses the membrane as a helical span at residues 974 to 991 (FETFIIFMILLSSGALAF). The Extracellular portion of the chain corresponds to 992–1004 (EDIYIEQRRMIKI). Residues 1005–1023 (ILEYADQVFTYVFVVEMLL) form a helical membrane-spanning segment. The Cytoplasmic portion of the chain corresponds to 1024–1037 (KWVAYGFKVYFTNA). Residues 1038–1056 (WCWLDFLIVDVSLISLTAN) traverse the membrane as a helical segment. Residues 1057–1064 (ILGYSELG) are Extracellular-facing. A helical transmembrane segment spans residues 1065–1083 (AIKSLRTLRALRPLRALSR). At 1084-1101 (FEGMRVVVVNALVGAIPS) the chain is on the cytoplasmic side. The helical transmembrane segment at 1102-1121 (IFNVLLVCLIFWLIFSIMGV) threads the bilayer. Residues 1122 to 1173 (NLFAGKFYYCFNETSEEVFDHNVVNNKTDCYELMEFHPEVRWMNGKINFDNV) are Extracellular-facing. Cysteine 1131 and cysteine 1151 are oxidised to a cystine. 2 N-linked (GlcNAc...) asparagine glycosylation sites follow: asparagine 1133 and asparagine 1147. The segment at residues 1174–1195 (GMGYLALLQVATFKGWMDIMYS) is an intramembrane region (pore-forming). Topologically, residues 1196-1212 (AVDSRAIESQPVYEANL) are extracellular. A helical membrane pass occupies residues 1213–1234 (YMYIYFVIFIIFGSFFTLNLFI). Topologically, residues 1235–1297 (GVIIDNFNQQ…LVFDFVTQQF (63 aa)) are cytoplasmic. An important for rapid channel inactivation region spans residues 1253 to 1255 (IFM). The IV repeat unit spans residues 1278–1575 (IPRPTNCCQG…WEKFDPTASQ (298 aa)). The helical transmembrane segment at 1298–1315 (FDIFIMVMICLNMVTMMV) threads the bilayer. The Extracellular portion of the chain corresponds to 1316–1326 (ETDDQSAEIEE). Residues 1327–1345 (ILFYINFAFIILFTGECVL) traverse the membrane as a helical segment. The Cytoplasmic portion of the chain corresponds to 1346–1357 (KITALRYHYFSI). A helical transmembrane segment spans residues 1358–1375 (GWNIFDFVVVILSILGIG). Residues 1376–1388 (LADLIEKYFVSPT) lie on the Extracellular side of the membrane. The chain crosses the membrane as a helical span at residues 1389 to 1405 (LFRVIRLARIGRVLRLI). Residues 1406 to 1424 (RGAKGIRTLLFALMMSLPA) lie on the Cytoplasmic side of the membrane. The chain crosses the membrane as a helical span at residues 1425 to 1442 (LFNIGLLLFLIMFIFSIF). Residues 1443-1464 (GMSNFAYVKKEVGIDDMMNFET) are Extracellular-facing. An intramembrane region (pore-forming) is located at residues 1465-1487 (FGNSIICMFMITTSAGWDGLLAP). Topologically, residues 1488 to 1516 (ILNSPPDCDPDVDNPGSTTRGNCGNAAVG) are extracellular. An intrachain disulfide couples cysteine 1495 to cysteine 1510. The chain crosses the membrane as a helical span at residues 1517–1539 (IVFFCSYIVMSFLVVVNMYIAII). The Cytoplasmic segment spans residues 1540–1784 (LENFNVATEE…AADNLRESIV (245 aa)). In terms of domain architecture, IQ spans 1669-1698 (EEVAASTIQRAYRSHILKRCVKQASYMYRD).

This sequence belongs to the sodium channel (TC 1.A.1.10) family. Nav1.4/SCN4A subfamily. As to quaternary structure, voltage-gated sodium (Nav) channels consist of an ion-conducting alpha subunit which is functional on its own associated with regulatory beta subunits. Post-translationally, lacks the cysteine which covalently binds the conotoxin GVIIJ. This cysteine (position 719) is speculated in other sodium channel subunits alpha to be implied in covalent binding with the sodium channel subunit beta-2 or beta-4. In terms of tissue distribution, expressed in skeletal muscle, heart, brain, spinal cord, and eye.

Its subcellular location is the cell membrane. The enzyme catalyses Na(+)(in) = Na(+)(out). Its function is as follows. Pore-forming subunit of a voltage-gated sodium (Nav) channel that directly mediates the depolarizing phase of action potentials in excitable membranes. Navs, also called VGSCs (voltage-gated sodium channels) or VDSCs (voltage-dependent sodium channels), operate by switching between closed and open conformations depending on the voltage difference across the membrane. In the open conformation they allow Na(+) ions to selectively pass through the pore, along their electrochemical gradient. The influx of Na+ ions provokes membrane depolarization, initiating the propagation of electrical signals throughout cells and tissues. The protein is Sodium channel protein type 4 subunit alpha B (scn4ab) of Danio rerio (Zebrafish).